Consider the following 674-residue polypeptide: DNA-directed RNA polymerase subunit beta' (674 aa).

4 residues coordinate Zn(2+): Cys-69, Cys-71, Cys-87, and Cys-90. Mg(2+)-binding residues include Asp-494, Asp-496, and Asp-498.

It belongs to the RNA polymerase beta' chain family. RpoC1 subfamily. In plastids the minimal PEP RNA polymerase catalytic core is composed of four subunits: alpha, beta, beta', and beta''. When a (nuclear-encoded) sigma factor is associated with the core the holoenzyme is formed, which can initiate transcription. It depends on Mg(2+) as a cofactor. Zn(2+) serves as cofactor.

The protein resides in the plastid. The protein localises to the chloroplast. The enzyme catalyses RNA(n) + a ribonucleoside 5'-triphosphate = RNA(n+1) + diphosphate. In terms of biological role, DNA-dependent RNA polymerase catalyzes the transcription of DNA into RNA using the four ribonucleoside triphosphates as substrates. This Psilotum nudum (Whisk fern) protein is DNA-directed RNA polymerase subunit beta'.